We begin with the raw amino-acid sequence, 637 residues long: Glutamate--cysteine ligase catalytic subunit (637 aa).

Methionine 1 carries the N-acetylmethionine modification. Serine 5 and serine 8 each carry phosphoserine.

The protein belongs to the glutamate--cysteine ligase type 3 family. Heterodimer of a catalytic heavy chain and a regulatory light chain.

It carries out the reaction L-cysteine + L-glutamate + ATP = gamma-L-glutamyl-L-cysteine + ADP + phosphate + H(+). It catalyses the reaction (2S)-2-aminobutanoate + L-glutamate + ATP = gamma-L-glutamyl-(2S)-2-aminobutanoate + ADP + phosphate + H(+). The protein operates within sulfur metabolism; glutathione biosynthesis; glutathione from L-cysteine and L-glutamate: step 1/2. Feedback inhibition by glutathione. Catalyzes the ATP-dependent ligation of L-glutamate and L-cysteine and participates in the first and rate-limiting step in glutathione biosynthesis. The protein is Glutamate--cysteine ligase catalytic subunit of Mus musculus (Mouse).